The following is a 262-amino-acid chain: Glutamate racemase (262 aa).

Substrate is bound by residues 7–8 (DS) and 39–40 (YG). The Proton donor/acceptor role is filled by C70. Residue 71–72 (NT) coordinates substrate. C182 serves as the catalytic Proton donor/acceptor. Residue 183–184 (TH) participates in substrate binding.

It belongs to the aspartate/glutamate racemases family.

The catalysed reaction is L-glutamate = D-glutamate. The protein operates within cell wall biogenesis; peptidoglycan biosynthesis. Provides the (R)-glutamate required for cell wall biosynthesis. The protein is Glutamate racemase of Campylobacter concisus (strain 13826).